A 545-amino-acid polypeptide reads, in one-letter code: Cytochrome P450 monooxygenase 212 (545 aa).

The N-terminal stretch at 1–14 is a signal peptide; the sequence is MAAYAWLYCALALG. Heme is bound at residue Cys-486.

It belongs to the cytochrome P450 family. Heme is required as a cofactor.

It functions in the pathway secondary metabolite biosynthesis. Its function is as follows. Cytochrome P450 monooxygenase that is able to use anthracene and pyrene as substrates for oxidation. The protein is Cytochrome P450 monooxygenase 212 of Postia placenta (strain ATCC 44394 / Madison 698-R) (Brown rot fungus).